Reading from the N-terminus, the 616-residue chain is Sodium- and chloride-dependent transporter XTRP3 (616 aa).

Basic residues predominate over residues 1-11 (MRLAIKRRASR). The interval 1–26 (MRLAIKRRASRGQRPGPDEKRARDME) is disordered. Topologically, residues 1-37 (MRLAIKRRASRGQRPGPDEKRARDMEKARPQWGNPLQ) are cytoplasmic. Basic and acidic residues predominate over residues 16 to 26 (GPDEKRARDME). A helical transmembrane segment spans residues 38–58 (FVFACISYAVGLGNVWRFPYL). Over 59–66 (CQMYGGGS) the chain is Extracellular. The chain crosses the membrane as a helical span at residues 67–87 (FLVPYLIMLIVEGMPLLYLEL). The Cytoplasmic segment spans residues 88–103 (AVGQRMRQGSIGAWRT). A helical membrane pass occupies residues 104–124 (ISPYLSGVGVASVVVSFFLSM). The Extracellular portion of the chain corresponds to 125-189 (YYNVINAWGF…ISPSIQENGG (65 aa)). N155 carries an N-linked (GlcNAc...) asparagine glycan. Residues 190–210 (VQWEPALCLTLAWLMVYLCIL) form a helical membrane-spanning segment. The Cytoplasmic portion of the chain corresponds to 211–218 (RGTESTGK). Residues 219 to 239 (VVYFTALMPYCVLIIYLVRGL) traverse the membrane as a helical segment. Over 240–265 (TLHGATNGLMYMFTPKIEQLANPKAW) the chain is Extracellular. A helical membrane pass occupies residues 266 to 286 (INAATQIFFSLGLGFGSLIAF). Over 287–300 (ASYNEPSNDCQKHA) the chain is Cytoplasmic. The helical transmembrane segment at 301-321 (VIVSVINSSTSIFASIVTFSI) threads the bilayer. Residues 322–413 (YGFKATFNYE…EAIKNMEVSQ (92 aa)) lie on the Extracellular side of the membrane. A glycan (N-linked (GlcNAc...) asparagine) is linked at N381. The helical transmembrane segment at 414–434 (LWSVLYFFMLLMLGMGSMLGN) threads the bilayer. Over 435 to 455 (TAAILTPLTDSKVISSYLPKE) the chain is Cytoplasmic. Residues 456–476 (AISGLVCLINCAVGMVFTMEA) form a helical membrane-spanning segment. Residues 477–489 (GNYWFDIFNDYAA) are Extracellular-facing. Residues 490–510 (TLSLLLIVLVETIAVCYVYGL) traverse the membrane as a helical segment. Topologically, residues 511–533 (RRFESDLRAMTGRPLNWYWKAMW) are cytoplasmic. The helical transmembrane segment at 534–554 (AFVSPLLIIGLFIFYLSDYIL) threads the bilayer. The Extracellular segment spans residues 555-578 (TGTLQYQAWDATQGQLVTKDYPPH). A helical membrane pass occupies residues 579 to 599 (ALAVIGLLVASSTMCIPLVAL). Residues 600 to 616 (GTFIRNRLKRGGSSPVA) lie on the Cytoplasmic side of the membrane.

The protein belongs to the sodium:neurotransmitter symporter (SNF) (TC 2.A.22) family. SLC6A20 subfamily. Highly expressed in epithelial cells of duodenum, jejunum, ileum, stomach, cecum, colon and kidney proximal tubule. Also expressed in the choroid plexus, microglia and meniges of the brain and in the ovary.

It localises to the apical cell membrane. The catalysed reaction is L-proline(out) + chloride(out) + 2 Na(+)(out) = L-proline(in) + chloride(in) + 2 Na(+)(in). It carries out the reaction 4-hydroxy-L-proline(out) + chloride(out) + 2 Na(+)(out) = 4-hydroxy-L-proline(in) + chloride(in) + 2 Na(+)(in). The enzyme catalyses 2-methyl-2-(methylamino)propanoate(out) + chloride(out) + 2 Na(+)(out) = 2-methyl-2-(methylamino)propanoate(in) + chloride(in) + 2 Na(+)(in). It catalyses the reaction L-pipecolate(out) + chloride(out) + 2 Na(+)(out) = L-pipecolate(in) + chloride(in) + 2 Na(+)(in). The catalysed reaction is glycine betaine(out) + chloride(out) + 2 Na(+)(out) = glycine betaine(in) + chloride(in) + 2 Na(+)(in). It carries out the reaction glycine(out) + chloride(out) + 2 Na(+)(out) = glycine(in) + chloride(in) + 2 Na(+)(in). In terms of biological role, mediates the Na(+)- and Cl(-)-dependent uptake of imino acids such as L-proline, N-methyl-L-proline and pipecolate as well as N-methylated amino acids. Also transports glycine, regulates proline and glycine homeostasis in the brain playing a role in the modulation of NMDAR currents. The chain is Sodium- and chloride-dependent transporter XTRP3 from Rattus norvegicus (Rat).